The sequence spans 670 residues: MAHHLPAAMESHQDFRSIKAKFQASQPEPSDLPKKPPKPEFGKLKKFSQPELSEHPKKAPLPEFGAVSLKPPPPEVTDLPKKPPPPEVTDLPKKPPPPEVTDLPKKPPPPEVTDLPKKPSKLELSDLSKKFPQLGATPFPRKPLQPEVGEAPLKASLPEPGAPARKPLQPDELSHPARPPSEPKSGAFPRKLWQPEAGEATPRSPQPELSTFPKKPAQPEFNVYPKKPPQPQVGGLPKKSVPQPEFSEAAQTPLWKPQSSEPKRDSSAFPKKASQPPLSDFPKKPPQPELGDLTRTSSEPEVSVLPKRPRPAEFKALSKKPPQPELGGLPRTSSEPEFNSLPRKLLQPERRGPPRKFSQPEPSAVLKRHPQPEFFGDLPRKPPLPSSASESSLPAAVAGFSSRHPLSPGFGAAGTPRWRSGGLVHSGGARPGLRPSHPPRRRPLPPASSLGHPPAKPPLPPGPVDMQSFRRPSAASIDLRRTRSAAGLHFQDRQPEDIPQVPDEIYELYDDVEPRDDSSPSPKGRDEAPSVQQAARRPPQDPALRKEKDPQPQQLPPMDPKLLKQLRKAEKAEREFRKKFKFEGEIVVHTKMMIDPNAKTRRGGGKHLGIRRGEILEVIEFTSNEEMLCRDPKGKYGYVPRTALLPLETEVYDDVDFCDPLENQPLPLGR.

The disordered stretch occupies residues 1–561; the sequence is MAHHLPAAME…PQQLPPMDPK (561 aa). A compositionally biased stretch (basic and acidic residues) spans 31–43; that stretch reads DLPKKPPKPEFGK. Repeat copies occupy residues 70–81, 82–93, 94–105, and 106–117. Residues 70 to 165 are 4 X 12 AA repeats of K-P-P-[PQ]-P-[EQ]-[VAF]-T-D-L-P-K; sequence KPPPPEVTDL…SLPEPGAPAR (96 aa). The segment covering 114-129 has biased composition (basic and acidic residues); that stretch reads DLPKKPSKLELSDLSK. S340 is modified (phosphoserine). Over residues 386–398 the composition is skewed to low complexity; the sequence is SSASESSLPAAVA. Residues 454–463 show a composition bias toward pro residues; sequence PAKPPLPPGP. Positions 504–514 are enriched in acidic residues; it reads EIYELYDDVEP. Residues 515-528 show a composition bias toward basic and acidic residues; the sequence is RDDSSPSPKGRDEA. The SH3 domain occupies 571–649; the sequence is KAEREFRKKF…PRTALLPLET (79 aa).

Interacts with SKAP2, LCP2 and DBNL. May interact with LYN. Interacts with NEK6. Post-translationally, may be phosphorylated on tyrosines. Expressed in peripheral blood leukocytes and bone marrow. Expressed in monocytes, and to a lesser extent in granulocytes and lymphocytes. Not expressed in non hematopoietic tissues except in lung.

May be involved in myeloid differentiation. May be involved in integrin signaling in neutrophils. Binds to PtdIns(4)P. The sequence is that of PML-RARA-regulated adapter molecule 1 (PRAM1) from Homo sapiens (Human).